The following is a 300-amino-acid chain: Hairy/enhancer-of-split related with YRPW motif protein 1 (300 aa).

Residues 1 to 52 (MKRGHDYSSSDSELDENIEVEKESADENGNLSSAAGSMSPSTSSQILARKRR) form a disordered region. Positions 32 to 44 (SSAAGSMSPSTSS) are enriched in low complexity. One can recognise a bHLH domain in the interval 48-103 (ARKRRRGIIEKRRRDRINNSLSELRRLVPSAFEKQGSAKLEKAEILQMTVDHLKML). The 37-residue stretch at 121–157 (YRSLGFRECLAEVARYLSIIEGMDTTDPLRVRLVSHL) folds into the Orange domain. Low complexity predominate over residues 199 to 210 (AHTSANSTSSST). Disordered regions lie at residues 199–232 (AHTS…LRVP) and 278–300 (LSPT…IGAF). The short motif at 290–293 (YRPW) is the YRPW motif element.

This sequence belongs to the HEY family. In terms of assembly, efficient DNA binding requires dimerization with another bHLH protein. Binds DNA in the form of homodimer or more strongly as a heterodimer with hes1/hairy1 or hes4/hairy2b. Also weakly interacts with the bHLH proteins hes2, neurod1 and neurod4/ath3. Interacts (via Orange domain) with ccdc89/boip (via C-terminus).

It is found in the nucleus. Functionally, downstream effector of Notch signaling. Transcriptional repressor which binds preferentially to the canonical E box sequence 5'-CACGTG-3'. Acts as a suppressor of neurogenesis by antagonizing proneural gene function. Functions during floorplate development. Plays a role in pronephros formation in the inhibition of distal tubule and duct cell fates and the promotion of glomus and proximal tubule formation. The chain is Hairy/enhancer-of-split related with YRPW motif protein 1 (hey1) from Xenopus tropicalis (Western clawed frog).